A 197-amino-acid chain; its full sequence is Recombination protein RecR (197 aa).

The segment at 56–71 adopts a C4-type zinc-finger fold; it reads CNVCFHFSADPICEIC. Residues 79–173 enclose the Toprim domain; sequence QTICVVADSR…KVTRIAFGLP (95 aa).

This sequence belongs to the RecR family.

Functionally, may play a role in DNA repair. It seems to be involved in an RecBC-independent recombinational process of DNA repair. It may act with RecF and RecO. The chain is Recombination protein RecR from Rippkaea orientalis (strain PCC 8801 / RF-1) (Cyanothece sp. (strain PCC 8801)).